A 515-amino-acid polypeptide reads, in one-letter code: 2,3-bisphosphoglycerate-independent phosphoglycerate mutase (515 aa).

Residues aspartate 14 and serine 64 each coordinate Mn(2+). Catalysis depends on serine 64, which acts as the Phosphoserine intermediate. Substrate contacts are provided by residues histidine 125, 155–156 (RD), arginine 187, arginine 193, 263–266 (RADR), and lysine 337. Mn(2+) is bound by residues aspartate 404, histidine 408, aspartate 445, histidine 446, and histidine 464.

Belongs to the BPG-independent phosphoglycerate mutase family. Monomer. Mn(2+) is required as a cofactor.

It carries out the reaction (2R)-2-phosphoglycerate = (2R)-3-phosphoglycerate. It functions in the pathway carbohydrate degradation; glycolysis; pyruvate from D-glyceraldehyde 3-phosphate: step 3/5. Catalyzes the interconversion of 2-phosphoglycerate and 3-phosphoglycerate. The chain is 2,3-bisphosphoglycerate-independent phosphoglycerate mutase from Pseudomonas aeruginosa (strain ATCC 15692 / DSM 22644 / CIP 104116 / JCM 14847 / LMG 12228 / 1C / PRS 101 / PAO1).